A 313-amino-acid polypeptide reads, in one-letter code: Ornithine carbamoyltransferase (313 aa).

Residues 57–60 (STRT), Gln-84, Arg-108, and 135–138 (HPCQ) each bind carbamoyl phosphate. L-ornithine is bound by residues Asn-166, Asp-230, and 234–235 (SM). Carbamoyl phosphate contacts are provided by residues 270-271 (CL) and Arg-298.

Belongs to the aspartate/ornithine carbamoyltransferase superfamily. OTCase family. As to quaternary structure, homohexamer.

The protein resides in the cytoplasm. The catalysed reaction is carbamoyl phosphate + L-ornithine = L-citrulline + phosphate + H(+). It functions in the pathway amino-acid biosynthesis; L-arginine biosynthesis; L-arginine from L-ornithine and carbamoyl phosphate: step 1/3. Its function is as follows. Reversibly catalyzes the transfer of the carbamoyl group from carbamoyl phosphate (CP) to the N(epsilon) atom of ornithine (ORN) to produce L-citrulline. The sequence is that of Ornithine carbamoyltransferase from Gloeobacter violaceus (strain ATCC 29082 / PCC 7421).